Here is a 517-residue protein sequence, read N- to C-terminus: Putative thymidine phosphorylase (517 aa).

It belongs to the thymidine/pyrimidine-nucleoside phosphorylase family. Type 2 subfamily.

It catalyses the reaction thymidine + phosphate = 2-deoxy-alpha-D-ribose 1-phosphate + thymine. In Legionella pneumophila (strain Paris), this protein is Putative thymidine phosphorylase.